Reading from the N-terminus, the 781-residue chain is Probable beta-D-xylosidase 5 (781 aa).

Residues 1–23 (MSIRRFVRLSLLIIALVSSLCES) form the signal peptide. Asparagine 43, asparagine 103, and asparagine 123 each carry an N-linked (GlcNAc...) asparagine glycan. Aspartate 291 is an active-site residue. N-linked (GlcNAc...) asparagine glycosylation is found at asparagine 342, asparagine 424, asparagine 504, asparagine 543, asparagine 601, and asparagine 653.

It belongs to the glycosyl hydrolase 3 family.

It is found in the secreted. The protein localises to the extracellular space. Its subcellular location is the extracellular matrix. The chain is Probable beta-D-xylosidase 5 (BXL5) from Arabidopsis thaliana (Mouse-ear cress).